Reading from the N-terminus, the 1645-residue chain is Histone-lysine N-methyltransferase set-26 (1645 aa).

Disordered stretches follow at residues Met1–Pro82, Glu109–Glu132, Asp200–Pro228, Thr417–Pro606, and Thr651–Ala789. Composition is skewed to low complexity over residues Glu16–Ile31 and Gln67–Pro82. Residues Pro207 to Pro228 are compositionally biased toward polar residues. Composition is skewed to low complexity over residues Arg429–Arg443 and Arg453–Ala467. Residues Met559–Pro578 show a composition bias toward basic and acidic residues. Positions Pro592–Val603 are enriched in pro residues. Residues Thr651–Tyr675 are compositionally biased toward polar residues. Basic residues-rich tracts occupy residues Gln684 to Ser699 and His731 to Arg741. A compositionally biased stretch (acidic residues) spans Ser780–Ala789. The PHD-type zinc-finger motif lies at Thr794 to Arg842. A disordered region spans residues Ala865 to Val904. The span at Lys881 to Pro899 shows a compositional bias: polar residues. Residues Met973–Asp1064 enclose the SET domain. A compositionally biased stretch (basic and acidic residues) spans Arg1099–Val1172. Disordered regions lie at residues Arg1099–Val1333, Ser1371–Gly1536, and Pro1548–Asn1645. Residues Met1103–Ser1217 are a coiled coil. The span at Glu1173 to Ser1183 shows a compositional bias: low complexity. The segment covering Ala1188–Arg1210 has biased composition (basic and acidic residues). Composition is skewed to polar residues over residues Thr1258–Thr1268 and Thr1300–Asn1311. Composition is skewed to basic and acidic residues over residues Ser1382–Asn1427, Lys1434–Pro1450, and Lys1468–Ser1485. The span at Ser1554–Ala1565 shows a compositional bias: polar residues.

It belongs to the class V-like SAM-binding methyltransferase superfamily. In terms of tissue distribution, expressed both in the germline and in somatic tissues.

The protein resides in the nucleus. The catalysed reaction is L-lysyl(9)-[histone H3] + 3 S-adenosyl-L-methionine = N(6),N(6),N(6)-trimethyl-L-lysyl(9)-[histone H3] + 3 S-adenosyl-L-homocysteine + 3 H(+). Functionally, histone methyltransferase that mediates trimethylation of 'Lys-9' of histone H3 in vitro. Involved in transcriptional regulation. Plays a role in the negative regulation of lifespan and in heat resistance. Together with set-9, negatively regulates lifespan in a germline-independent, partially daf-16-dependent fashion. Together with set-9, plays a role in germline development and maintenance and might play a role in the restriction of the trimethylation mark on histone H3 'Lys-4'(H3K4me3) to target genes specifically in the germline. Together with spr-5, required for transgenerational fertility. The polypeptide is Histone-lysine N-methyltransferase set-26 (Caenorhabditis elegans).